The primary structure comprises 273 residues: Large ribosomal subunit protein uL2 (273 aa).

A disordered region spans residues 224 to 264 (AMNPVDHPHGGGEGRNFGKHPVTPWGIQTKGKKTRKNKRTD). The segment covering 253-264 (KGKKTRKNKRTD) has biased composition (basic residues).

The protein belongs to the universal ribosomal protein uL2 family. As to quaternary structure, part of the 50S ribosomal subunit. Forms a bridge to the 30S subunit in the 70S ribosome.

In terms of biological role, one of the primary rRNA binding proteins. Required for association of the 30S and 50S subunits to form the 70S ribosome, for tRNA binding and peptide bond formation. It has been suggested to have peptidyltransferase activity; this is somewhat controversial. Makes several contacts with the 16S rRNA in the 70S ribosome. This is Large ribosomal subunit protein uL2 from Buchnera aphidicola subsp. Acyrthosiphon pisum (strain 5A).